Here is a 123-residue protein sequence, read N- to C-terminus: MPTINQLVRKGREEIRKKSSTPALQCCPQKRGVCVRVYTTTPKKPNSALRKIARVRLTNGIEVTSYIPGIGHNLQEHSVVLIRGGRVKDLPGVRYHIIRGTLDALGVADRKQGRSKYGTKRPK.

Position 89 is a 3-methylthioaspartic acid (Asp-89).

Belongs to the universal ribosomal protein uS12 family. As to quaternary structure, part of the 30S ribosomal subunit. Contacts proteins S8 and S17. May interact with IF1 in the 30S initiation complex.

With S4 and S5 plays an important role in translational accuracy. Functionally, interacts with and stabilizes bases of the 16S rRNA that are involved in tRNA selection in the A site and with the mRNA backbone. Located at the interface of the 30S and 50S subunits, it traverses the body of the 30S subunit contacting proteins on the other side and probably holding the rRNA structure together. The combined cluster of proteins S8, S12 and S17 appears to hold together the shoulder and platform of the 30S subunit. The sequence is that of Small ribosomal subunit protein uS12 from Syntrophobacter fumaroxidans (strain DSM 10017 / MPOB).